The sequence spans 236 residues: Small ribosomal subunit protein uS2c (236 aa).

It belongs to the universal ribosomal protein uS2 family.

It localises to the plastid. It is found in the chloroplast. The sequence is that of Small ribosomal subunit protein uS2c (rps2) from Nicotiana tabacum (Common tobacco).